We begin with the raw amino-acid sequence, 209 residues long: ADP-ribose pyrophosphatase (209 aa).

Substrate contacts are provided by residues 28 to 29 (FF), 51 to 52 (RE), R56, and R79. The Nudix hydrolase domain occupies 55–193 (ERGHAAVLLP…KIDNAASVIA (139 aa)). Mg(2+) is bound at residue A96. A Nudix box motif is present at residues 97-118 (GMIEEGESVEDVARREAIEEAG). Residue M98 coordinates substrate. Positions 112 and 116 each coordinate Mg(2+). Substrate contacts are provided by residues 133 to 135 (SPG) and E139. Residue E162 is the Proton acceptor of the active site. Residue E164 participates in Mg(2+) binding.

This sequence belongs to the Nudix hydrolase family. NudF subfamily. In terms of assembly, homodimer. It depends on Mg(2+) as a cofactor.

The catalysed reaction is ADP-D-ribose + H2O = D-ribose 5-phosphate + AMP + 2 H(+). Inhibited by phosphorylated compounds such as AMP, ADP, ATP, 3-phosphoglyceric acid and PPi. Not inhibited by orthophosphate. Activity is high in cells grown in low glucose concentrations and decreases dramatically as glucose concentration increases. Functionally, acts on ADP-mannose and ADP-glucose as well as ADP-ribose. Prevents glycogen biosynthesis. The reaction catalyzed by this enzyme is a limiting step of the gluconeogenic process. This chain is ADP-ribose pyrophosphatase (nudF), found in Escherichia coli O157:H7.